We begin with the raw amino-acid sequence, 486 residues long: Amyloid-beta A4 precursor protein-binding family B member 3 (486 aa).

The 33-residue stretch at 29–61 folds into the WW domain; sequence TGLPPGWRKIRDAAGTYYWHVPSGSTQWQRPTW. 2 PID domains span residues 113–280 and 285–440; these read EPGA…QVEL and SQAA…RTSS. A disordered region spans residues 438 to 460; sequence TSSMDSPGGPLPPPLLKGGAGGA.

As to quaternary structure, interacts with APP (via intracellular domain). Interacts with APLP1 and APLP2 (via intracellular domain).

It localises to the cytoplasm. The protein resides in the nucleus. May modulate the internalization of amyloid-beta precursor protein. The sequence is that of Amyloid-beta A4 precursor protein-binding family B member 3 from Mus musculus (Mouse).